A 150-amino-acid polypeptide reads, in one-letter code: Large ribosomal subunit protein uL11 (150 aa).

The disordered stretch occupies residues 83-111 (AAGLKPQGKRNRAKGSEKPGRQTAGTVTA).

Belongs to the universal ribosomal protein uL11 family. As to quaternary structure, part of the ribosomal stalk of the 50S ribosomal subunit. Interacts with L10 and the large rRNA to form the base of the stalk. L10 forms an elongated spine to which L12 dimers bind in a sequential fashion forming a multimeric L10(L12)X complex. In terms of processing, one or more lysine residues are methylated.

In terms of biological role, forms part of the ribosomal stalk which helps the ribosome interact with GTP-bound translation factors. The sequence is that of Large ribosomal subunit protein uL11 from Paracoccus denitrificans (strain Pd 1222).